A 437-amino-acid chain; its full sequence is Sodium/bile acid cotransporter 4 (437 aa).

Residues 1–103 (MDSLDNTTLL…PPFWDTPLNH (103 aa)) are Extracellular-facing. Asn6 and Asn20 each carry an N-linked (GlcNAc...) asparagine glycan. Positions 15 to 79 (SLLPDNLTLS…SSSLTVGVAG (65 aa)) are disordered. Over residues 22–41 (TLSPNAGSPSASTLSPLAVT) the composition is skewed to polar residues. Low complexity predominate over residues 42–74 (SSPGPGLSLAPSPSIGFSPEATPTPEPTSSSLT). Residues 104–124 (GLNVFVGAALCITMLGLGCTV) form a helical membrane-spanning segment. The Cytoplasmic segment spans residues 125–140 (DVNHFGAHVRRPVGAL). A helical transmembrane segment spans residues 141–161 (LAALCQFGFLPLLAFLLALIF). Residues 162 to 197 (KLDEVAAVAVLLCGCCPGGNLSNLMSLLVDGDMNLS) lie on the Extracellular side of the membrane. Residues Asn181 and Asn195 are each glycosylated (N-linked (GlcNAc...) asparagine). Residues 198–218 (IIMTISSTLLALVLMPLCLWI) traverse the membrane as a helical segment. At 219–233 (YSRAWINTPLVQLLP) the chain is on the cytoplasmic side. Residues 234–254 (LGAVTLTLCSTLIPIGLGVFI) traverse the membrane as a helical segment. Over 255 to 267 (RYKYNRVADYIVK) the chain is Extracellular. A helical transmembrane segment spans residues 268–288 (VSLWSLLVTLVVLFIMTGTML). Residues 289-291 (GPE) are Cytoplasmic-facing. The helical transmembrane segment at 292–312 (LLASIPATVYVVAIFMPLAGY) threads the bilayer. Over 313–360 (ASGYGLATLFHLPPNCKRTVCLETGSQNVQLCTAILKLAFPPRFIGSM) the chain is Extracellular. The helical transmembrane segment at 361-381 (YMFPLLYALFQSAEAGVFVLI) threads the bilayer. Residues 382–437 (YKMYGSEILHKREALDEDEDTDISYKKLKEEEMADTSYGTVGTDDLVMMETTQTAL) are Cytoplasmic-facing.

This sequence belongs to the bile acid:sodium symporter (BASS) (TC 2.A.28) family. Activated following N-terminal proteolytic cleavage by thrombin and/or proteases. As to expression, highest expression in the brain and significantly above background levels in the eye, prostate, and whole embryo tissue preparations.

It is found in the cell membrane. Functionally, transporter for bile acids. This Mus musculus (Mouse) protein is Sodium/bile acid cotransporter 4 (Slc10a4).